A 159-amino-acid polypeptide reads, in one-letter code: Cytochrome c-type biogenesis protein CcmE (159 aa).

Over 1–8 (MNPRRKKR) the chain is Cytoplasmic. A helical; Signal-anchor for type II membrane protein transmembrane segment spans residues 9–29 (LLVIVAVLFGIGASIGLVLYA). Topologically, residues 30 to 159 (LQENINLFYT…KPKYNLDSGN (130 aa)) are periplasmic. Residues His-130 and Tyr-134 each contribute to the heme site.

Belongs to the CcmE/CycJ family.

Its subcellular location is the cell inner membrane. In terms of biological role, heme chaperone required for the biogenesis of c-type cytochromes. Transiently binds heme delivered by CcmC and transfers the heme to apo-cytochromes in a process facilitated by CcmF and CcmH. This Pseudoalteromonas translucida (strain TAC 125) protein is Cytochrome c-type biogenesis protein CcmE.